The primary structure comprises 1153 residues: MALKMVKGSIDRMFDKNLQDLVRGIRNHKEDEAKYISQCIDEIKQELKQDNIAVKANAVCKLTYLQMLGYDISWAAFNIIEVMSASKFTFKRIGYLAASQSFHEGTDVIMLTTNQIRKDLSSPSQYDTGVALTGLSCFVTPDLARDLANDIMTLMSHTKPYIRKKAVLIMYKVFLKYPESLRPAFPRLKEKLEDPDPGVQSAAVNVICELARRNPKNYLSLAPLFFKLMTSSTNNWVLIKIIKLFGALTPLEPRLGKKLIEPLTNLIHSTSAMSLLYECVNTVIAVLISLSSGMPNHSASIQLCVQKLRILIEDSDQNLKYLGLLAMSKILKTHPKSVQSHKDLILQCLDDKDESIRLRALDLLYGMVSKKNLMEIVKKLMTHVDKAEGTTYRDELLTKIIDICSQSNYQYITNFEWYISILVELTRLEGTRHGHLIAAQMLDVAIRVKAIRKFAVSQMSALLDSAHLLASSTQRNGICEVLYAAAWICGEFSEHLQEPHHTLEAMLRPRVTTLPGHIQAVYVQNVVKLYASILQQKEQAGEAEGAQAVTQLMVDRLPQFVQSADLEVQERASCILQLVKHIQKLQAKDVPVAEEVSALFAGELNPVAPKAQKKVPVPEGLDLDAWINEPLSDSESEDERPRAVFHEEEQRRPKHRPSEADEEELARRREARKQEQANNPFYIKSSPSPQKRYQDTPGVEHIPVVQIDLSVPLKVPGLPMSDQYVKLEEERRHRQKLEKDKRRKKRKEKEKKGKRRHSSLPTESDEDIAPAQQVDIVTEEMPENALPSDEDDKDPNDPYRALDIDLDKPLADSEKLPIQKHRNTETSKSPEKDVPMVEKKSKKPKKKEKKHKEKERDKEKKKEKEKKKSPKPKKKKHRKEKEERTKGKKKSKKQPPGSEEAAGEPVQNGAPEEEQLPPESSYSLLAENSYVKMTCDIRGSLQEDSQVTVAIVLENRSSSILKGMELSVLDSLNARMARPQGSSVHDGVPVPFQLPPGVSNEAQYVFTIQSIVMAQKLKGTLSFIAKNDEGATHEKLDFRLHFSCSSYLITTPCYSDAFAKLLESGDLSMSSIKVDGIRMSFQNLLAKICFHHHFSVVERVDSCASMYSRSIQGHHVCLLVKKGENSVSVDGKCSDSTLLSNLLEEMKATLAKC.

N-acetylalanine is present on alanine 2. 11 HEAT repeats span residues 34 to 71 (KYISQCIDEIKQELKQDNIAVKANAVCKLTYLQMLGYD), 77 to 114 (FNIIEVMSASKFTFKRIGYLAASQSFHEGTDVIMLTTN), 142 to 179 (DLARDLANDIMTLMSHTKPYIRKKAVLIMYKVFLKYPE), 180 to 216 (SLRPAFPRLKEKLEDPDPGVQSAAVNVICELARRNPK), 254 to 292 (RLGKKLIEPLTNLIHSTSAMSLLYECVNTVIAVLISLSS), 299 to 336 (ASIQLCVQKLRILIEDSDQNLKYLGLLAMSKILKTHPK), 338 to 373 (VQSHKDLILQCLDDKDESIRLRALDLLYGMVSKKNL), 375 to 409 (EIVKKLMTHVDKAEGTTYRDELLTKIIDICSQSNY), 431 to 468 (TRHGHLIAAQMLDVAIRVKAIRKFAVSQMSALLDSAHL), 497 to 535 (QEPHHTLEAMLRPRVTTLPGHIQAVYVQNVVKLYASILQ), and 548 to 585 (AVTQLMVDRLPQFVQSADLEVQERASCILQLVKHIQKL). Disordered stretches follow at residues 629–696 (EPLS…YQDT) and 726–920 (KLEE…PPES). Serine 632, serine 634, serine 636, and serine 658 each carry phosphoserine. Residues 639-675 (ERPRAVFHEEEQRRPKHRPSEADEEELARRREARKQE) are compositionally biased toward basic and acidic residues. Residues 659–679 (EADEEELARRREARKQEQANN) are a coiled coil. Serine 688 carries the post-translational modification Phosphoserine. Residues 725–756 (VKLEEERRHRQKLEKDKRRKKRKEKEKKGKRR) are a coiled coil. Positions 726–740 (KLEEERRHRQKLEKD) are enriched in basic and acidic residues. Over residues 741–758 (KRRKKRKEKEKKGKRRHS) the composition is skewed to basic residues. Serine 758 and serine 759 each carry phosphoserine. A Phosphothreonine modification is found at threonine 762. Phosphoserine is present on residues serine 764, alanine 785, serine 788, lysine 828, and serine 829. Residues 777 to 794 (VTEEMPENALPSDEDDKD) are compositionally biased toward acidic residues. Over residues 795-839 (PNDPYRALDIDLDKPLADSEKLPIQKHRNTETSKSPEKDVPMVEK) the composition is skewed to basic and acidic residues. Basic residues-rich tracts occupy residues 840–853 (KSKKPKKKEKKHKE) and 863–879 (EKEKKKSPKPKKKKHRK). Residues 845–869 (KKKEKKHKEKERDKEKKKEKEKKKS) are a coiled coil. At valine 931 the chain carries Phosphoserine.

Belongs to the adaptor complexes large subunit family. AP-3 associates with the BLOC-1 complex. Adaptor protein complex 3 (AP-3) is a heterotetramer composed of two large adaptins (delta-type subunit AP3D1 and beta-type subunit AP3B1 or AP3B2), a medium adaptin (mu-type subunit AP3M1 or AP3M2) and a small adaptin (sigma-type subunit APS1 or AP3S2). Interacts with SLC30A2. Interacts with CLN3 (via dileucine motif); this interaction facilitates lysosomal targeting. As to expression, present in all adult tissues examined with the highest levels in skeletal muscle, heart, pancreas and testis.

It is found in the cytoplasm. It localises to the golgi apparatus membrane. Functionally, part of the AP-3 complex, an adaptor-related complex which is not clathrin-associated. The complex is associated with the Golgi region as well as more peripheral structures. It facilitates the budding of vesicles from the Golgi membrane and may be directly involved in trafficking to lysosomes. Involved in process of CD8+ T-cell and NK cell degranulation. In concert with the BLOC-1 complex, AP-3 is required to target cargos into vesicles assembled at cell bodies for delivery into neurites and nerve terminals. The protein is AP-3 complex subunit delta-1 (AP3D1) of Homo sapiens (Human).